The sequence spans 683 residues: U4/U6 small nuclear ribonucleoprotein Prp3 (683 aa).

The region spanning 1 to 87 (MALSKRELDE…HSKSSSDRSR (87 aa)) is the PWI domain. Residues 73-107 (GRSSRHSKSSSDRSRKRELKEVFGDDSEISKESSG) show a composition bias toward basic and acidic residues. Positions 73-135 (GRSSRHSKSS…IPGPPSESPG (63 aa)) are disordered. Lys139 participates in a covalent cross-link: Glycyl lysine isopeptide (Lys-Gly) (interchain with G-Cter in SUMO2). The disordered stretch occupies residues 153–183 (IEERKKQLSFISPPTPQPKTPSSSQPERLPI). Ser164 is modified (phosphoserine). The residue at position 167 (Thr167) is a Phosphothreonine. Glycyl lysine isopeptide (Lys-Gly) (interchain with G-Cter in SUMO2) cross-links involve residues Lys244 and Lys252. The mediates interaction with SART3 stretch occupies residues 416 to 550 (NLVEHPAQLN…VHISVYRVRN (135 aa)). At Ser619 the chain carries Phosphoserine.

In terms of assembly, component of the precatalytic spliceosome (spliceosome B complex). Component of the U4/U6-U5 tri-snRNP complex, a building block of the precatalytic spliceosome (spliceosome B complex). The U4/U6-U5 tri-snRNP complex is composed of the U4, U6 and U5 snRNAs and at least PRPF3, PRPF4, PRPF6, PRPF8, PRPF31, SNRNP200, TXNL4A, SNRNP40, SNRPB, SNRPD1, SNRPD2, SNRPD3, SNRPE, SNRPF, SNRPG, DDX23, CD2BP2, PPIH, SNU13, EFTUD2, SART1 and USP39, plus LSM2, LSM3, LSM4, LSM5, LSM6, LSM7 and LSM8. Interacts directly with PRPF4. Part of a heteromeric complex containing PPIH, PRPF3 and PRPF4 that is stable in the absence of RNA. Interacts with SART3; the interaction is direct and recruits the deubiquitinase USP4 to PRPF3. Interacts with PRPF19. Interacts ('Lys-63'-linked polyubiquitinated) with PRPF8 (via the MPN (JAB/Mov34) domain); may stabilize the U4/U6-U5 tri-snRNP complex. Interacts with ERCC6. In terms of processing, ubiquitinated. Undergoes 'Lys-63'-linked polyubiquitination by PRPF19 and deubiquitination by USP4. 'Lys-63'-linked ubiquitination increases the affinity for PRPF8 and may regulate the assembly of the U4/U6-U5 tri-snRNP complex.

It is found in the nucleus. The protein resides in the nucleus speckle. In terms of biological role, plays a role in pre-mRNA splicing as component of the U4/U6-U5 tri-snRNP complex that is involved in spliceosome assembly, and as component of the precatalytic spliceosome (spliceosome B complex). This is U4/U6 small nuclear ribonucleoprotein Prp3 (PRPF3) from Pongo abelii (Sumatran orangutan).